The sequence spans 385 residues: Probable threonine protease PRSS50 (385 aa).

Positions 1–39 (MGRWCQTVARGQRPRTSAPSRAGALLLLLLLLRSAGCWG) are cleaved as a signal peptide. In terms of domain architecture, Peptidase S1 spans 93-358 (VSEGKVDPYR…YQHWIWDCLN (266 aa)). A glycan (N-linked (GlcNAc...) asparagine) is linked at N133. C138 and C154 are joined by a disulfide. Catalysis depends on charge relay system residues H153 and D206. 3 disulfide bridges follow: C240–C316, C273–C296, and C306–C334. A glycan (N-linked (GlcNAc...) asparagine) is linked at N279. Catalysis depends on T310, which acts as the Charge relay system.

Belongs to the peptidase S1 family. As to expression, testis specific. Differentially expressed in some breast cancer tissues.

Its subcellular location is the endoplasmic reticulum. May be involved in proteolysis through its threonine endopeptidase activity. The polypeptide is Probable threonine protease PRSS50 (PRSS50) (Homo sapiens (Human)).